A 431-amino-acid polypeptide reads, in one-letter code: Histidine--tRNA ligase (431 aa).

The segment at 1 to 20 (MALQRPKGTQDHLPDGSPKL) is disordered.

This sequence belongs to the class-II aminoacyl-tRNA synthetase family. In terms of assembly, homodimer.

It localises to the cytoplasm. The catalysed reaction is tRNA(His) + L-histidine + ATP = L-histidyl-tRNA(His) + AMP + diphosphate + H(+). The protein is Histidine--tRNA ligase of Deinococcus geothermalis (strain DSM 11300 / CIP 105573 / AG-3a).